A 129-amino-acid chain; its full sequence is Mini-ribonuclease 3-like protein (129 aa).

The active site involves Asp-23.

It belongs to the MrnC RNase family.

Its function is as follows. Might be a ribonuclease involved in RNA processing. This chain is Mini-ribonuclease 3-like protein (mrnCL), found in Fusobacterium nucleatum subsp. nucleatum (strain ATCC 25586 / DSM 15643 / BCRC 10681 / CIP 101130 / JCM 8532 / KCTC 2640 / LMG 13131 / VPI 4355).